The following is a 430-amino-acid chain: Glycine reductase complex component B subunits alpha and beta (430 aa).

Cysteine 242 (schiff-base intermediate with substrate; via pyruvic acid) is an active-site residue. Residue cysteine 242 is modified to Pyruvic acid (Cys).

Heterohexamer of two alpha, two beta and two gamma subunits. Component of the glycine reductase complex, together with components A and C. PB is substrate specific. In terms of processing, the peptide chain is cleaved into beta and alpha chains, and the alpha chain N-terminal cysteine is deaminated and oxidized to form a reactive pyruvoyl group.

The enzyme catalyses acetyl phosphate + [thioredoxin]-disulfide + NH4(+) + H2O = [thioredoxin]-dithiol + glycine + phosphate + H(+). Functionally, in the first step of glycine reductase, the substrate is bound to component PB via a Schiff base intermediate. Then the PB-activated substrate is nucleophilically attacked by the selenol anion of component PA to transform it to a carboxymethylated selenoether and the respective amine. By action of component PC, acetyl phosphate is formed, leaving component PA in its oxidized state. Finally component PA becomes reduced by the thioredoxin system to start a new catalytic cycle of reductive deamination. In Acetoanaerobium sticklandii (strain ATCC 12662 / DSM 519 / JCM 1433 / CCUG 9281 / NCIMB 10654 / HF) (Clostridium sticklandii), this protein is Glycine reductase complex component B subunits alpha and beta (grdE).